The following is a 109-amino-acid chain: Thioredoxin (109 aa).

The 108-residue stretch at 2–109 (ETLLWKDARE…LVEKIKELFK (108 aa)) folds into the Thioredoxin domain. C27 and C30 are joined by a disulfide.

This sequence belongs to the thioredoxin family.

Its function is as follows. Participates in various redox reactions through the reversible oxidation of its active center dithiol to a disulfide and catalyzes dithiol-disulfide exchange reactions. The chain is Thioredoxin (trxA) from Mycoplasmopsis pulmonis (strain UAB CTIP) (Mycoplasma pulmonis).